Here is a 564-residue protein sequence, read N- to C-terminus: MTETAKRPLYVPHAGPSLLEMPLLNKGSAFSTQERIDFNLQGLLPHNIETIEEQTERAYSQYNLCNTDLDRHIFLRSIQDNNETLFFRLLEEHLEEMMPIIYTPTVGQACQEFSKIYRTHRGLFISYPDRERIDDILRSATKNNVKIVVVTDSERILGLGDQGIGGMGIPIGKLSLYTACGGISPAYTLPVVLDVGTNNPDLLNDPMYMGWRHERVSGAQYEEFVDLFIQAIKRRWPNVLLQFEDFAQTNAMPLLERYKDELCCFNDDIQGTAAVAVGTLLAACKAKGEKLSEQTVTFVGAGSAGCGIAEQIIAAMQLEGLDEAQARRRIFMVDRWGLLTDDMSNLLDFQHRLAQKRADLGAWGGQQGDDLALLEVIRNARPTVLIGVSGQRGLFSEEVIRELHSHCKQPLVMPLSNPTSRVEATPQEILNWTDGQALVATGSPFQPVQVGDKRIPIAQCNNAYIFPGIGLGVIAARANRVTEGMLMAAANALANCSPIVTRGEGAVLPALGDIREVSKRIAVAVAKQAQAEGKALHTSDEVLNDAIEANFWFPRYRAYRRTSF.

Catalysis depends on Tyr-102, which acts as the Proton donor. Arg-155 serves as a coordination point for NAD(+). Lys-173 acts as the Proton acceptor in catalysis. The a divalent metal cation site is built by Glu-244, Asp-245, and Asp-268. 2 residues coordinate NAD(+): Asp-268 and Asn-417.

Belongs to the malic enzymes family. In terms of assembly, homotetramer. The cofactor is Mg(2+). Mn(2+) is required as a cofactor.

The enzyme catalyses (S)-malate + NAD(+) = pyruvate + CO2 + NADH. The catalysed reaction is oxaloacetate + H(+) = pyruvate + CO2. The chain is NAD-dependent malic enzyme from Pseudomonas aeruginosa (strain UCBPP-PA14).